Consider the following 471-residue polypeptide: MTLPSKENFSEWYHEVIQTAEIMDVRYPVKGLYVWFPFGFKIRQLVYSKLREIMDREHDEVYFPALIPETELGKEGEHIKGFEDEVYWITHGGLTPLDVKLALRPTSETAMYPMFRLWVRNHADLPLKVYQIVNTFRYETKHTRPLIRLREITSFKEAHTVHKDFEEAAEHVKKAIGFYKEFYDFLAIPYMVIRRPEWDKFPGAAYTIAFDTIMPDGRTLQIGTVHHLADNFARTFDIKYEAPNGEHYYAHQTCYGISERCIAALISVHGDDLGLVLPFEVAPVQIVIIPILYKGKEEAVMEACRKLAEKLKAFRVVLDEGEDRPGAKYYKWELKGVPIRFEIGPRDAEKGVAVVSFRDEKRKFEVPLDEVDEGKVLEWARELKQRLRNAAAERMAEKVKFVENTGEIEEWGGVVAVYLCSDEDCGHSVEEHGKSLLGWFEEVPDWLDLEPEGKCVVCGREGRLAALAKTY.

The protein belongs to the class-II aminoacyl-tRNA synthetase family. ProS type 3 subfamily. In terms of assembly, homodimer.

Its subcellular location is the cytoplasm. It carries out the reaction tRNA(Pro) + L-proline + ATP = L-prolyl-tRNA(Pro) + AMP + diphosphate. Its function is as follows. Catalyzes the attachment of proline to tRNA(Pro) in a two-step reaction: proline is first activated by ATP to form Pro-AMP and then transferred to the acceptor end of tRNA(Pro). This Archaeoglobus fulgidus (strain ATCC 49558 / DSM 4304 / JCM 9628 / NBRC 100126 / VC-16) protein is Proline--tRNA ligase.